A 637-amino-acid polypeptide reads, in one-letter code: Chaperone protein HtpG (637 aa).

Residues 1 to 345 form an a; substrate-binding region; sequence MSQQETHGFQ…SNDLPLNVSR (345 aa). Positions 346–562 are b; it reads EILQDNHVTK…DGEMSTQMIK (217 aa). Residues 563–637 form a c region; the sequence is LMQAAGQPVP…MNQMLLANMK (75 aa).

It belongs to the heat shock protein 90 family. As to quaternary structure, homodimer.

The protein localises to the cytoplasm. In terms of biological role, molecular chaperone. Has ATPase activity. This chain is Chaperone protein HtpG, found in Shewanella baltica (strain OS155 / ATCC BAA-1091).